Here is a 150-residue protein sequence, read N- to C-terminus: Ribonuclease H (150 aa).

The RNase H type-1 domain maps to 1–141 (MKFIEVHTDG…VDVLARNQAI (141 aa)). The Mg(2+) site is built by aspartate 9, glutamate 47, aspartate 69, and aspartate 133.

It belongs to the RNase H family. As to quaternary structure, monomer. It depends on Mg(2+) as a cofactor.

The protein localises to the cytoplasm. The catalysed reaction is Endonucleolytic cleavage to 5'-phosphomonoester.. Endonuclease that specifically degrades the RNA of RNA-DNA hybrids. This is Ribonuclease H from Xanthomonas euvesicatoria pv. vesicatoria (strain 85-10) (Xanthomonas campestris pv. vesicatoria).